We begin with the raw amino-acid sequence, 250 residues long: UPF0736 protein YjbA (250 aa).

The protein belongs to the UPF0736 family.

The protein is UPF0736 protein YjbA (yjbA) of Bacillus subtilis (strain 168).